The primary structure comprises 136 residues: Large ribosomal subunit protein eL27B (136 aa).

The protein belongs to the eukaryotic ribosomal protein eL27 family. In terms of assembly, component of the large ribosomal subunit (LSU). Mature yeast ribosomes consist of a small (40S) and a large (60S) subunit. The 40S small subunit contains 1 molecule of ribosomal RNA (18S rRNA) and 33 different proteins (encoded by 57 genes). The large 60S subunit contains 3 rRNA molecules (25S, 5.8S and 5S rRNA) and 46 different proteins (encoded by 81 genes).

Its subcellular location is the cytoplasm. Functionally, component of the ribosome, a large ribonucleoprotein complex responsible for the synthesis of proteins in the cell. The small ribosomal subunit (SSU) binds messenger RNAs (mRNAs) and translates the encoded message by selecting cognate aminoacyl-transfer RNA (tRNA) molecules. The large subunit (LSU) contains the ribosomal catalytic site termed the peptidyl transferase center (PTC), which catalyzes the formation of peptide bonds, thereby polymerizing the amino acids delivered by tRNAs into a polypeptide chain. The nascent polypeptides leave the ribosome through a tunnel in the LSU and interact with protein factors that function in enzymatic processing, targeting, and the membrane insertion of nascent chains at the exit of the ribosomal tunnel. The sequence is that of Large ribosomal subunit protein eL27B from Saccharomyces cerevisiae (strain ATCC 204508 / S288c) (Baker's yeast).